The sequence spans 182 residues: Crossover junction endodeoxyribonuclease RuvC (182 aa).

Active-site residues include Asp7, Glu69, and Asp141. Mg(2+) is bound by residues Asp7, Glu69, and Asp141.

It belongs to the RuvC family. In terms of assembly, homodimer which binds Holliday junction (HJ) DNA. The HJ becomes 2-fold symmetrical on binding to RuvC with unstacked arms; it has a different conformation from HJ DNA in complex with RuvA. In the full resolvosome a probable DNA-RuvA(4)-RuvB(12)-RuvC(2) complex forms which resolves the HJ. Mg(2+) is required as a cofactor.

The protein resides in the cytoplasm. It carries out the reaction Endonucleolytic cleavage at a junction such as a reciprocal single-stranded crossover between two homologous DNA duplexes (Holliday junction).. Functionally, the RuvA-RuvB-RuvC complex processes Holliday junction (HJ) DNA during genetic recombination and DNA repair. Endonuclease that resolves HJ intermediates. Cleaves cruciform DNA by making single-stranded nicks across the HJ at symmetrical positions within the homologous arms, yielding a 5'-phosphate and a 3'-hydroxyl group; requires a central core of homology in the junction. The consensus cleavage sequence is 5'-(A/T)TT(C/G)-3'. Cleavage occurs on the 3'-side of the TT dinucleotide at the point of strand exchange. HJ branch migration catalyzed by RuvA-RuvB allows RuvC to scan DNA until it finds its consensus sequence, where it cleaves and resolves the cruciform DNA. This is Crossover junction endodeoxyribonuclease RuvC from Polaromonas naphthalenivorans (strain CJ2).